We begin with the raw amino-acid sequence, 186 residues long: UPF0303 protein ZMO1353 (186 aa).

This sequence belongs to the UPF0303 family.

The protein is UPF0303 protein ZMO1353 of Zymomonas mobilis subsp. mobilis (strain ATCC 31821 / ZM4 / CP4).